The chain runs to 243 residues: Probable transcriptional regulator ycf27 (243 aa).

The Response regulatory domain occupies 7 to 120 (KILVVDDEAS…ELEARIRSVL (114 aa)). Position 56 is a 4-aspartylphosphate (D56). Residues 76 to 94 (DVPIIMLTALGEVCDRITG) constitute a DNA-binding region (H-T-H motif). Positions 135-236 (SGIISIGFLK…ARGTGYLFQR (102 aa)) form a DNA-binding region, ompR/PhoB-type.

The protein resides in the plastid. The protein localises to the chloroplast. In terms of biological role, probable promoter-specific protein mediating the interaction between DNA and RNA polymerase. This is Probable transcriptional regulator ycf27 (ycf27) from Pyropia yezoensis (Susabi-nori).